We begin with the raw amino-acid sequence, 154 residues long: MADVKKNCLASLSLAPISKAQQAQVGKDFYKFFFTNHPDLRKYFKGAENFTADDVQKSDRFEKLGSGLLLSVHILANTFDNEDVFRAFCRETIDRHVGRGLDPALWKAFWSVWVAFLESKGGVSGDQKAAWDKLGTVFNDECQHQLAKHGLPHL.

A Globin domain is found at 1 to 147; it reads MADVKKNCLA…FNDECQHQLA (147 aa). A heme b-binding site is contributed by H96.

Belongs to the globin family.

The protein resides in the cytoplasm. The sequence is that of Myoglobin (GLBB) from Nippostrongylus brasiliensis (Rat hookworm).